The primary structure comprises 33 residues: Photosystem II reaction center protein Psb30 (33 aa).

A helical transmembrane segment spans residues 5 to 25 (VIAQLTVLSLIVLSGPLVIIL).

The protein belongs to the Psb30/Ycf12 family. PSII is composed of 1 copy each of membrane proteins PsbA, PsbB, PsbC, PsbD, PsbE, PsbF, PsbH, PsbI, PsbJ, PsbK, PsbL, PsbM, PsbT, PsbX, PsbY, PsbZ, Psb30/Ycf12, peripheral proteins of the oxygen-evolving complex and a large number of cofactors. It forms dimeric complexes.

It localises to the plastid. Its subcellular location is the chloroplast thylakoid membrane. Its function is as follows. A core subunit of photosystem II (PSII), probably helps stabilize the reaction center. This is Photosystem II reaction center protein Psb30 from Chlorokybus atmophyticus (Soil alga).